A 1170-amino-acid chain; its full sequence is MHRLRVLRHLKFCISTSHRTTVVLKNTRSFCNNIPSTSFASEAAAKYEKKSPTEHVLLRPDTYIGGVAMREDQIIWLRDSENRKMIAKEVTYPPGLLKIFDEILVNAADNKARDSSMNRLEVWLDRETARISVWNNGSGLPVEIHPTEGIYVPTLVFGNLFTSSNYDDSEIKTVGGRNGYGAKLCNIFSKEFIVETVDTRIKRRFRQKWYDNMKKCNEAEVVEILDETVKDYTKVEFVPDLERFQIDKLSDDVIDLIGRRVFEVAATLPRDVDVYLNGQKCDVDGFEDYVKMFNDSSSLLFLHPTPRWHVGVAKRNNFFGESHVVLPKIVSFVNNINTEKGGSHVDYVMDKIVNIIKPIVDSKLGDPTKSVKPAVIKNNLSIFINCLIENPSFESQTKETLTTKAKNFGSIFECDAKKTAEWAEQSGLIEDIVEEVLNMKKKKLPGKRVSVSSVRDIVKLEDAEWAGITGTAEKCTLILTEGDSAKALALAGLEVLGRETYGVFPLKGKLLNVSNLDDARASKNEEISNLLRILGLKFEDSNSITRESLRYGRLLILADQDEDGSHIKGLIVNFIHKFWPSLVHTDGFIQSFRTPLLKAKKGDKVRSFFSMNEYRKWADVEEGGKWKIKYYKGLGTSTSNEAREYFSDLDHHTVNFKYTGTTDDDAIRMAFDRDKSDERKEWIRRSENEITNEDDGKTEISYQEFVDGQLMQFGMVDLKRSIPSLIDGLKPSQRKILWTLLNNMDESTEIKVSQLAGAVAHRQSYHHGEESLVRTIIRMGQTFCGSSNLPLLQPIGQFGTRHEGGNDAASARYIFTALAPTTRLLFPQADDDLLQKNVEEGMVVEPTWLCPIVPLILINGTEGIGTGWSTKIANRNPIDIIDMIRRKIDSISTEYEIPPFYEEFRGKLEVVTPTKFISSGKIQLIRPERKNASTFSIEIVELPIGIWTSKYKEKLSKIVETLPVLEFSERHTEKRVHFRITLDRKKSSRFLQKSNSDLLNYFKLRTSLTENRVLFDRNGELKEFGNISEIAAEFFEVRRDLYEKRLKIQKEECEAKLIYVENQLNFIEMVTNGTIEIRSMGRNQLEEKLQEMGFRVDPMATIAKNSKKANYGYLLEMPVSRLTSDEMKRLEERKSRRRTELEAAESADWKSVWRSELDKLAEAVGNNRKS.

Residues Asn106, Asn135, 163-165 (SSN), 176-183 (GRNGYGAK), and 396-398 (QTK) contribute to the ATP site. The Toprim domain occupies 475–590 (CTLILTEGDS…SLVHTDGFIQ (116 aa)). Residues Glu481, Asp559, and Asp561 each coordinate Mg(2+). The Topo IIA-type catalytic domain maps to 722–1157 (IPSLIDGLKP…DWKSVWRSEL (436 aa)). The O-(5'-phospho-DNA)-tyrosine intermediate role is filled by Tyr813.

Belongs to the type II topoisomerase family. Homodimer. Mg(2+) serves as cofactor. Mn(2+) is required as a cofactor. Requires Ca(2+) as cofactor.

It is found in the mitochondrion. It catalyses the reaction ATP-dependent breakage, passage and rejoining of double-stranded DNA.. Functionally, control of topological states of DNA by transient breakage and subsequent rejoining of DNA strands. Topoisomerase II makes double-strand breaks. In Caenorhabditis elegans, this protein is Putative DNA topoisomerase 2, mitochondrial.